Here is a 390-residue protein sequence, read N- to C-terminus: Homeobox protein Meis1 (390 aa).

The 85-residue stretch at 108–192 (GGDVCSSESF…IDLVIDDREG (85 aa)) folds into the MEIS N-terminal domain. Positions 190 to 202 (REGGSKSDSEDIT) are enriched in basic and acidic residues. The tract at residues 190 to 279 (REGGSKSDSE…KKRHKKRGIF (90 aa)) is disordered. Over residues 203-213 (RSANLTDQPSW) the composition is skewed to polar residues. The segment at residues 272-334 (RHKKRGIFPK…NARRRIVQPM (63 aa)) is a DNA-binding region (homeobox; TALE-type). The interaction with DNA stretch occupies residues 299–329 (YPSEEQKKQLAQDTGLTILQVNNWFINARRR). Residues 335–390 (IDQSNRAVSQGTPYNPDGQPMGGFVMDGQQHMGIRAPGPMSGMGMNMGMEGQWHYM) form a required for transcriptional activation region.

It belongs to the TALE/MEIS homeobox family. As to quaternary structure, interacts with the N-terminal region of PBX1 to form a heterodimer which binds DNA including a cAMP-responsive sequence in CYP17. Also forms heterodimers with PBX2. Forms heterotrimers with PBX1 or PBX2 and a number of HOX proteins including HOXA9, HOXD4 and HOXD9 where it acts as a non-DNA-binding partner. Also forms heterotrimers with PBX1 and HOX proteins including HOXD9 and HOXD10 where PBX1 is the non-DNA-binding partner. Heterodimer with DLX3. Heterodimer with HOXB13. In terms of tissue distribution, expressed at low level in normal immunohepatopoietic tissues, including the fetal liver. Expressed in a subset of myeloid leukemia cell lines, with the highest expression seen in those with a megakaryocytic-erythroid phenotype. Also expressed at high levels in the cerebellum.

It localises to the nucleus. Its function is as follows. Acts as a transcriptional regulator of PAX6. Acts as a transcriptional activator of PF4 in complex with PBX1 or PBX2. Required for hematopoiesis, megakaryocyte lineage development and vascular patterning. May function as a cofactor for HOXA7 and HOXA9 in the induction of myeloid leukemias. This is Homeobox protein Meis1 (MEIS1) from Homo sapiens (Human).